The chain runs to 381 residues: Queuine tRNA-ribosyltransferase (381 aa).

The active-site Proton acceptor is the aspartate 90. Substrate is bound by residues 90–94 (DSGGF), aspartate 144, glutamine 193, and glycine 221. The interval 252–258 (GVGTPEN) is RNA binding. Residue aspartate 271 is the Nucleophile of the active site. Residues 276-280 (TRNAR) are RNA binding; important for wobble base 34 recognition. Zn(2+) contacts are provided by cysteine 309, cysteine 311, cysteine 314, and histidine 340.

This sequence belongs to the queuine tRNA-ribosyltransferase family. In terms of assembly, homodimer. Within each dimer, one monomer is responsible for RNA recognition and catalysis, while the other monomer binds to the replacement base PreQ1. It depends on Zn(2+) as a cofactor.

It carries out the reaction 7-aminomethyl-7-carbaguanine + guanosine(34) in tRNA = 7-aminomethyl-7-carbaguanosine(34) in tRNA + guanine. It participates in tRNA modification; tRNA-queuosine biosynthesis. Catalyzes the base-exchange of a guanine (G) residue with the queuine precursor 7-aminomethyl-7-deazaguanine (PreQ1) at position 34 (anticodon wobble position) in tRNAs with GU(N) anticodons (tRNA-Asp, -Asn, -His and -Tyr). Catalysis occurs through a double-displacement mechanism. The nucleophile active site attacks the C1' of nucleotide 34 to detach the guanine base from the RNA, forming a covalent enzyme-RNA intermediate. The proton acceptor active site deprotonates the incoming PreQ1, allowing a nucleophilic attack on the C1' of the ribose to form the product. After dissociation, two additional enzymatic reactions on the tRNA convert PreQ1 to queuine (Q), resulting in the hypermodified nucleoside queuosine (7-(((4,5-cis-dihydroxy-2-cyclopenten-1-yl)amino)methyl)-7-deazaguanosine). This chain is Queuine tRNA-ribosyltransferase, found in Helicobacter hepaticus (strain ATCC 51449 / 3B1).